Consider the following 600-residue polypeptide: Keratin, type II cuticular Hb4 (600 aa).

The head stretch occupies residues 1 to 165; the sequence is MSCRSYRVSS…PNAQRVKKDE (165 aa). The IF rod domain maps to 165-476; the sequence is EKEQIKTLNN…RLLEGEESRL (312 aa). The segment at 166-200 is coil 1A; sequence KEQIKTLNNKFASFIDKVRFLEQQNKLLETKWSFL. The tract at residues 201–210 is linker 1; sequence QEQKCIRSNL. The coil 1B stretch occupies residues 211–311; sequence EPLFESYITN…YMEEIQLLQS (101 aa). The interval 312-328 is linker 12; the sequence is HISETSVIVKMDNSRDL. Residues 329–472 form a coil 2 region; it reads NLDGIIAEVK…ATYRRLLEGE (144 aa). A tail region spans residues 473-600; that stretch reads ESRLCEGVGP…STTTSCRTKY (128 aa).

It belongs to the intermediate filament family. Heterotetramer of two type I and two type II keratins. Expressed in the hair follicles.

In Homo sapiens (Human), this protein is Keratin, type II cuticular Hb4 (KRT84).